A 110-amino-acid chain; its full sequence is Cytochrome c oxidase subunit 4B (110 aa).

3 consecutive transmembrane segments (helical) span residues 27–47 (YQVL…LTVA), 50–70 (GVGS…QVIF), and 88–108 (LFLY…VTII).

The protein belongs to the cytochrome c oxidase bacterial subunit 4 family.

The protein localises to the cell membrane. It catalyses the reaction 4 Fe(II)-[cytochrome c] + O2 + 8 H(+)(in) = 4 Fe(III)-[cytochrome c] + 2 H2O + 4 H(+)(out). The chain is Cytochrome c oxidase subunit 4B (ctaF) from Bacillus subtilis (strain 168).